The primary structure comprises 70 residues: uncharacterized protein (70 aa).

This is an uncharacterized protein from Haloarcula hispanica (His1V).